A 345-amino-acid chain; its full sequence is Protein lifeguard 1 (345 aa).

The disordered stretch occupies residues 1–115; it reads MSHEKSFLVS…GNYQEEGPPS (115 aa). Pro residues-rich tracts occupy residues 24–46 and 79–98; these read APMP…PFQP and GPYP…PPFQ. The next 7 helical transmembrane spans lie at 139 to 159, 171 to 191, 202 to 222, 227 to 247, 257 to 277, 281 to 301, and 320 to 340; these read VFLV…IFTF, VWTY…LSCC, LVAL…IASF, AVIM…IFSM, MGVL…CIFI, ILEI…LAVD, and FAAL…LTII.

The protein belongs to the BI1 family. LFG subfamily.

The protein localises to the membrane. In terms of biological role, potential apoptotic regulator. The protein is Protein lifeguard 1 (Grina) of Mus musculus (Mouse).